Here is a 423-residue protein sequence, read N- to C-terminus: Enolase (423 aa).

Position 164 (Gln-164) interacts with (2R)-2-phosphoglycerate. Residue Glu-206 is the Proton donor of the active site. 3 residues coordinate Mg(2+): Asp-243, Glu-289, and Asp-316. (2R)-2-phosphoglycerate is bound by residues Lys-341, Arg-370, Ser-371, and Lys-392. Lys-341 acts as the Proton acceptor in catalysis.

It belongs to the enolase family. Mg(2+) serves as cofactor.

The protein resides in the cytoplasm. It is found in the secreted. Its subcellular location is the cell surface. It catalyses the reaction (2R)-2-phosphoglycerate = phosphoenolpyruvate + H2O. It participates in carbohydrate degradation; glycolysis; pyruvate from D-glyceraldehyde 3-phosphate: step 4/5. Its function is as follows. Catalyzes the reversible conversion of 2-phosphoglycerate (2-PG) into phosphoenolpyruvate (PEP). It is essential for the degradation of carbohydrates via glycolysis. In Desulfotalea psychrophila (strain LSv54 / DSM 12343), this protein is Enolase.